Reading from the N-terminus, the 1350-residue chain is Nicotinate hydroxylase hnxS (1350 aa).

[2Fe-2S] cluster contacts are provided by cysteine 49, cysteine 54, cysteine 89, cysteine 92, cysteine 133, and cysteine 135. The interval 164–193 (LVGTEEETESDMGAHSGSGDTGSRSSGSCG) is disordered. Residues 180 to 192 (GSGDTGSRSSGSC) are compositionally biased toward low complexity. Residues 256 to 445 (YGDAEQAWVK…TKIAVPMPSK (190 aa)) enclose the FAD-binding PCMH-type domain. FAD-binding positions include 284-291 (LVTGASEV), 379-383 (CLAGN), aspartate 392, and lysine 455. Glutamine 793 and phenylalanine 824 together coordinate Mo-molybdopterin. Glutamate 828 and arginine 906 together coordinate substrate. 2 residues coordinate Mo-molybdopterin: arginine 938 and alanine 1107. Glutamate 1281 functions as the Proton acceptor in the catalytic mechanism.

The protein belongs to the xanthine dehydrogenase family. Requires [2Fe-2S] cluster as cofactor. The cofactor is FAD. It depends on Mo-molybdopterin as a cofactor.

Allopurinol inhibits catalytic activity in a linear fashion. Functionally, nicotinate hydroxylase, part of the hnx cluster involved in the purine degradation. The nicotinate hydroxylase hnxS accepts nicotinate as a substrate and catalyzes the first step of nicotinate catabolism. HnxS also accepts hypoxanthine, but not xanthine, as a substrate. The major facilitator-type transporters hxnP and hxnZ are probably involved in the uptake of nicotinate-derived metabolites, and the oxidoreductases hxnT and hxnY in the further metabolism of 6-OH nicotinic acid. The sequence is that of Nicotinate hydroxylase hnxS from Emericella nidulans (strain FGSC A4 / ATCC 38163 / CBS 112.46 / NRRL 194 / M139) (Aspergillus nidulans).